A 344-amino-acid chain; its full sequence is Thioredoxin reductase FGSG_00043 (344 aa).

Residues 12-15 (GGPA), 34-39 (DSVSYR), His-51, and Ala-121 contribute to the FAD site. An intrachain disulfide couples Cys-165 to Cys-168. Residues Asp-314 and 321–322 (FV) each bind FAD.

This sequence belongs to the class-II pyridine nucleotide-disulfide oxidoreductase family. As to quaternary structure, homodimer. FAD serves as cofactor.

It functions in the pathway mycotoxin biosynthesis. Thioredoxin reductase; part of the gene cluster that mediates the biosynthesis of gramillins A and B, bicyclic lipopeptides that induce cell death in maize leaves but not in wheat leaves. The nonribosomal peptide synthetase GRA1 incorporates respectively a glutamic adic (Glu), a leucine (Leu), a serine (Ser), a hydroxyglutamine (HOGln), a 2-amino decanoic acid, and 2 cysteins (CysB and CysA). The biosynthesis of 2-amino decanoic acid incorporated in gramillins could be initiated by a fatty acid synthase composed of the alpha and beta subunits FGSG_00036 and FGSG_11656. The cytochrome P450 monooxygenase FGSG_15680 could hydroxylate the fatty acid chain. Subsequent oxidation to the ketone by the oxidoreductase FGSG_00048 and transamination by aminotransferase FGSG_00049 could form 2-amino-decanoic acid. On the other hand, FGSG_15680 could also be responsible for the HO-modified glutamine at the gamma-position. Whether hydroxylation occurs on the fully assembled product or on the Gln residue prior to assembly into the gramillins requires further proof. The thioredoxin FGSG_00043 could also be required for the disulfide-bond formation between CysA and CysB. The specific involvement of the remaining proteins from the cluster is more difficult to discern, but could have broader regulatory (FGSG_00040 and FGSG_11657) or enzymatic functions (FGSG_00044 and FGSG_00045). The final C-domain of GRA1 does not possess the expected sequence of a termination CT domain, often implicated in macrocyclization and release of a cyclopeptidein fungal NRPs; and the thioesterase FGSG_00047 may act in concert with the terminal C-domain of GRA1 to catalyze the formation of the macrocyclic anhydride and release of the products. In Gibberella zeae (strain ATCC MYA-4620 / CBS 123657 / FGSC 9075 / NRRL 31084 / PH-1) (Wheat head blight fungus), this protein is Thioredoxin reductase FGSG_00043.